Reading from the N-terminus, the 323-residue chain is Ankyrin repeat and SOCS box protein 11 (323 aa).

ANK repeat units follow at residues 64–93 (ADRS…NVNL), 97–126 (NRVS…HVNG), 130–159 (HGAT…KAQF), 162–191 (HLAS…NIDH), 195–224 (QLGT…SVDH), and 227–256 (WLDT…NLKR). The 50-residue stretch at 274–323 (VEQALLLCEGPPALSQLCRLCVRKCLGRACHQAIHKLHLPEPLERFLLYQ) folds into the SOCS box domain.

This sequence belongs to the ankyrin SOCS box (ASB) family. As to quaternary structure, substrate-recognition component of the ECS(ASB11) complex, composed of ASB11, CUL5, ELOB, ELOC and RNF7/RBX2.

It localises to the endoplasmic reticulum. Its pathway is protein modification; protein ubiquitination. Substrate-recognition component of a cullin-5-RING E3 ubiquitin-protein ligase complex (ECS complex, also named CRL5 complex), which mediates the ubiquitination and subsequent proteasomal degradation of target proteins, such as BIK, DIRAS2 and RPN1. The ECS(ASB11) complex acts as a regulator of the endoplasmic reticulum unfolded protein response by mediating ubiquitination and degradation of BIK. The sequence is that of Ankyrin repeat and SOCS box protein 11 (ASB11) from Pongo abelii (Sumatran orangutan).